The following is a 757-amino-acid chain: DNA endonuclease RBBP8 (757 aa).

The tract at residues 22-45 (DLWTKLKEYHDKETQGLQVKVTKL) is essential for binding to the MRN complex and for RPA focus formation on DNA damage. A coiled-coil region spans residues 35 to 84 (TQGLQVKVTKLKKERILDAQRLEEFFTKNQQLREQQKVLHETIKVLEDRL). The required for interaction with LMO4, probably by stabilizing the interaction through RPPB8 dimerization stretch occupies residues 45-160 (LKKERILDAQ…TDLESEEDVI (116 aa)). Glycyl lysine isopeptide (Lys-Gly) (interchain with G-Cter in SUMO2) cross-links involve residues K62 and K115. The stretch at 117–138 (ITELMNEKNTLQEENKKLSEQL) forms a coiled coil. K193 is covalently cross-linked (Glycyl lysine isopeptide (Lys-Gly) (interchain with G-Cter in SUMO2)). A Phosphoserine modification is found at S272. T309 carries the phosphothreonine modification. Phosphoserine is present on residues S320, S321, and S343. Residues 348-375 (GKKTHLKTVPLSNTSAPGPEKPRSKSED) form a disordered region. Glycyl lysine isopeptide (Lys-Gly) (interchain with G-Cter in SUMO2) cross-links involve residues K354 and K372. Residue S373 is modified to Phosphoserine. Glycyl lysine isopeptide (Lys-Gly) (interchain with G-Cter in SUMO2) cross-links involve residues K390, K399, and K405. The span at 407 to 417 (TSEPISEQGNI) shows a compositional bias: polar residues. The segment at 407–430 (TSEPISEQGNIGHSKDTDRDKHVV) is disordered. The segment covering 419–429 (HSKDTDRDKHV) has biased composition (basic and acidic residues). Residues K433 and K443 each participate in a glycyl lysine isopeptide (Lys-Gly) (interchain with G-Cter in SUMO2) cross-link. The PXDLS motif stretch occupies residues 484-488 (PLDLS). Positions 484-488 (PLDLS) match the PXDLS motif motif. Positions 503–551 (CENSKIRFRQVTLYEALKPIPRDSSSSRKALSGSCGLTKDSPEEPCLQE) are damage-recruitment motif. K520 is covalently cross-linked (Glycyl lysine isopeptide (Lys-Gly) (interchain with G-Cter in SUMO2); alternate). The tract at residues 524–544 (RDSSSSRKALSGSCGLTKDSP) is disordered. Residues K564 and K570 each participate in a glycyl lysine isopeptide (Lys-Gly) (interchain with G-Cter in SUMO2) cross-link. Residue K596 forms a Glycyl lysine isopeptide (Lys-Gly) (interchain with G-Cter in SUMO2); alternate linkage. Residues K605, K630, and K632 each participate in a glycyl lysine isopeptide (Lys-Gly) (interchain with G-Cter in SUMO2) cross-link. Residues 633-677 (SLQNNQDVSFENIQWSIDPGADLSQYKMGVTVDDTKDGSQSRLAG) are required for interaction with LMO4, probably by making physical contact with LMO4. S656 is modified (phosphoserine; by ATM). K668 is covalently cross-linked (Glycyl lysine isopeptide (Lys-Gly) (interchain with G-Cter in SUMO2)). S671 is subject to Phosphoserine. The segment covering 696–728 (KKQEQKGEESPNGERKMNDSLEDMFDRTTHEEY) has biased composition (basic and acidic residues). The disordered stretch occupies residues 696–757 (KKQEQKGEES…TTTKKPNISW (62 aa)). K711 is covalently cross-linked (Glycyl lysine isopeptide (Lys-Gly) (interchain with G-Cter in SUMO2)). S715 carries the phosphoserine modification. A compositionally biased stretch (polar residues) spans 747–757 (STTTKKPNISW).

This sequence belongs to the COM1/SAE2/CtIP family. As to quaternary structure, homotetramer; formed by antiparallel association of helical extensions protruding from the N-termini of two parallel coiled-coil dimers. Forms a dumbbell-shaped particle in which polar globular domains are held about 30 nm apart by a central rod. Homotetramerization is required for DNA-end resection and repair. Interacts (via the PXDLS motif) with CTBP1; the interaction is disrupted via binding of the adenovirus E1A to CTBP1. Component of the BRCA1-RBBP8 complex. Interacts (the Ser-321 phosphorylated form) with BRCA1 (via the C-terminal BRCT domains): the interaction occurs in the G2 phase, ubiquitinates RBBP8 and involves RBBP8 in BRCA1-dependent G2/M checkpoint control on DNA damage. Interacts with RB1. Interacts with the MRN complex. Interacts directly with MRE11; the interaction is required for efficient homologous recombination (HR) and regulation of the MRN complex. Interacts directly with RAD50. Interacts (when phosphorylated by CDK1) with NBN; promoting association with the MRN complex. Interacts with LMO4 (via the LIM zinc-binding 1 domain). Interacts with SIAH1. Interacts with RNF138. Interacts with EXD2. Interacts with CUL3 and KLHL15; this interaction leads to RBBP8 proteasomal degradation. Directly interacts with PIN1; this interaction depends upon RBBP8 phosphorylation, predominantly at Thr-309. Interacts with FZR1; this interaction leads to APC/C-mediated RBBP8 proteasomal degradation. Interacts with AUNIP; leading to recruit RBBP8 to sites of DNA damage. Interacts with SAMHD1. Interacts with HDGFL2. Hyperphosphorylation upon ionizing radiation results in dissociation from BRCA1. Phosphorylation by CDK1 is essential for the recruitment to DNA and the DNA repair function. Phosphorylated on Ser-321 as cells enter G2 phase. This phosphorylation is required for binding BRCA1 and for the G2/M DNA damage transition checkpoint control. Phosphorylation at Thr-309, probably catalyzed by CDK2, is required for PIN1-binding, while phosphorylation at Ser-272 serves as a PIN1 isomerization site. Phosphorylation at Thr-309 is cell-cycle dependent. It steadily increases during S phase, peaks at late S/G2 phase, and drops at G1. Phosphorylation is not required for tetramerization. Binds to DNA more strongly when dephosphorylated. In terms of processing, ubiquitinated. Ubiquitination at multiple sites by BRCA1 (via its N-terminal RING domain) does not lead to its proteasomal degradation but instead the ubiquitinated RBBP8 binds to chromatin following DNA damage and may play a role in G2/M checkpoint control. Ubiquitinated by RNF138 at its N-terminus. Ubiquitinated through 'Lys-48' by the E3 CUL3-KLHL15 complex; this modification leads to proteasomal degradation. Ubiquitinated by the E3 FZR1/APC/C complex; this modification leads to proteasomal degradation.

It is found in the nucleus. The protein localises to the chromosome. Functionally, endonuclease that cooperates with the MRE11-RAD50-NBN (MRN) complex in DNA-end resection, the first step of double-strand break (DSB) repair through the homologous recombination (HR) pathway. HR is restricted to S and G2 phases of the cell cycle and preferentially repairs DSBs resulting from replication fork collapse. Key determinant of DSB repair pathway choice, as it commits cells to HR by preventing classical non-homologous end-joining (NHEJ). Specifically promotes the endonuclease activity of the MRN complex to clear DNA ends containing protein adducts: recruited to DSBs by NBN following phosphorylation by CDK1, and promotes the endonuclease activity of MRE11 to clear protein-DNA adducts and generate clean double-strand break ends. Functions downstream of the MRN complex and ATM, promotes ATR activation and its recruitment to DSBs in the S/G2 phase facilitating the generation of ssDNA. Component of the BRCA1-RBBP8 complex that regulates CHEK1 activation and controls cell cycle G2/M checkpoints on DNA damage. During immunoglobulin heavy chain class-switch recombination, promotes microhomology-mediated alternative end joining (A-NHEJ) and plays an essential role in chromosomal translocations. Binds preferentially to DNA Y-junctions and to DNA substrates with blocked ends and promotes intermolecular DNA bridging. This Bos taurus (Bovine) protein is DNA endonuclease RBBP8 (RBBP8).